The sequence spans 393 residues: Sialyltransferase-like protein 1 (393 aa).

Residues 1–8 are Cytoplasmic-facing; that stretch reads MKRPLRRP. A helical; Signal-anchor for type II membrane protein transmembrane segment spans residues 9–27; sequence FAVLLFVVLCAAASFPSVL. Residues 28-393 are Lumenal-facing; that stretch reads RRSVGPAPVL…IAVPPVVFYH (366 aa). Asparagine 49, asparagine 212, and asparagine 258 each carry an N-linked (GlcNAc...) asparagine glycan.

It belongs to the glycosyltransferase 29 family. Expressed in leaves and stalks. Expressed at low levels in roots.

It is found in the golgi apparatus membrane. Functionally, possesses sialyltransferase-like activity in vitro. Transfers sialic acid to the oligosaccharide Gal-beta-1,3-GalNAc and to glycoproteins such as asialofetuin, alpha-1-acid glycoprotein (NeuAc-alpha-2,3-Gal-beta-1,3-GalNAc-) and andasialo-alpha-1-acid glycoprotein. The transferred sialic acid is linked to galactose of Gal-beta-1,3-GalNAc through alpha-2,6-linkage. The sequence is that of Sialyltransferase-like protein 1 from Oryza sativa subsp. japonica (Rice).